Consider the following 316-residue polypeptide: Pyridoxal 5'-phosphate synthase subunit PdxS (316 aa).

Asp-44 provides a ligand contact to D-ribose 5-phosphate. Lys-101 functions as the Schiff-base intermediate with D-ribose 5-phosphate in the catalytic mechanism. Gly-173 is a D-ribose 5-phosphate binding site. Lys-185 provides a ligand contact to D-glyceraldehyde 3-phosphate. D-ribose 5-phosphate is bound by residues Gly-234 and 255 to 256 (GS).

Belongs to the PdxS/SNZ family. In terms of assembly, in the presence of PdxT, forms a dodecamer of heterodimers.

The enzyme catalyses aldehydo-D-ribose 5-phosphate + D-glyceraldehyde 3-phosphate + L-glutamine = pyridoxal 5'-phosphate + L-glutamate + phosphate + 3 H2O + H(+). The protein operates within cofactor biosynthesis; pyridoxal 5'-phosphate biosynthesis. Functionally, catalyzes the formation of pyridoxal 5'-phosphate from ribose 5-phosphate (RBP), glyceraldehyde 3-phosphate (G3P) and ammonia. The ammonia is provided by the PdxT subunit. Can also use ribulose 5-phosphate and dihydroxyacetone phosphate as substrates, resulting from enzyme-catalyzed isomerization of RBP and G3P, respectively. The sequence is that of Pyridoxal 5'-phosphate synthase subunit PdxS from Sulfurisphaera tokodaii (strain DSM 16993 / JCM 10545 / NBRC 100140 / 7) (Sulfolobus tokodaii).